A 555-amino-acid chain; its full sequence is Sulfite reductase [ferredoxin] 2 (555 aa).

The disordered stretch occupies residues 1-31 (MTTARPAKARNEGQWALGNREPLNPNEEMKQ). The 3'-(S-cysteinyl)-tyrosine (Tyr-Cys) cross-link spans 69 to 161 (YTQREQGYDG…AVGLRTTEAC (93 aa)). C417, C423, C463, and C467 together coordinate [4Fe-4S] cluster. C467 serves as a coordination point for siroheme.

This sequence belongs to the nitrite and sulfite reductase 4Fe-4S domain family. As to quaternary structure, monomer. Requires siroheme as cofactor. [4Fe-4S] cluster is required as a cofactor.

The catalysed reaction is hydrogen sulfide + 6 oxidized [2Fe-2S]-[ferredoxin] + 3 H2O = sulfite + 6 reduced [2Fe-2S]-[ferredoxin] + 7 H(+). Its function is as follows. Catalyzes the reduction of sulfite to sulfide, a step in the biosynthesis of sulfur-containing amino acids and cofactors. The protein is Sulfite reductase [ferredoxin] 2 (sir2) of Mycolicibacterium paratuberculosis (strain ATCC BAA-968 / K-10) (Mycobacterium paratuberculosis).